A 193-amino-acid polypeptide reads, in one-letter code: dCTP deaminase, dUMP-forming (193 aa).

Residues R107–R112, D125, T133–E135, Q154, and Y168 each bind dCTP. The active-site Proton donor/acceptor is E135. The segment at A169–G193 is disordered. The segment covering G173 to G193 has biased composition (basic and acidic residues).

Belongs to the dCTP deaminase family. In terms of assembly, homotrimer.

The catalysed reaction is dCTP + 2 H2O = dUMP + NH4(+) + diphosphate. It functions in the pathway pyrimidine metabolism; dUMP biosynthesis; dUMP from dCTP: step 1/1. Functionally, bifunctional enzyme that catalyzes both the deamination of dCTP to dUTP and the hydrolysis of dUTP to dUMP without releasing the toxic dUTP intermediate. The polypeptide is dCTP deaminase, dUMP-forming (Methanopyrus kandleri (strain AV19 / DSM 6324 / JCM 9639 / NBRC 100938)).